Reading from the N-terminus, the 424-residue chain is Enolase (424 aa).

Glutamine 165 is a binding site for (2R)-2-phosphoglycerate. The active-site Proton donor is the glutamate 207. The Mg(2+) site is built by aspartate 244, glutamate 283, and aspartate 310. Lysine 335, arginine 364, serine 365, and lysine 386 together coordinate (2R)-2-phosphoglycerate. Lysine 335 (proton acceptor) is an active-site residue.

It belongs to the enolase family. The cofactor is Mg(2+).

Its subcellular location is the cytoplasm. It localises to the secreted. It is found in the cell surface. It carries out the reaction (2R)-2-phosphoglycerate = phosphoenolpyruvate + H2O. It functions in the pathway carbohydrate degradation; glycolysis; pyruvate from D-glyceraldehyde 3-phosphate: step 4/5. In terms of biological role, catalyzes the reversible conversion of 2-phosphoglycerate (2-PG) into phosphoenolpyruvate (PEP). It is essential for the degradation of carbohydrates via glycolysis. The chain is Enolase from Chlamydia abortus (strain DSM 27085 / S26/3) (Chlamydophila abortus).